The following is a 556-amino-acid chain: Solute carrier family 22 member 20 (556 aa).

The Cytoplasmic portion of the chain corresponds to Met1–Arg15. The helical transmembrane segment at Phe16–Phe36 threads the bilayer. Residues Leu37–Asp137 are Extracellular-facing. 4 N-linked (GlcNAc...) asparagine glycosylation sites follow: Asn39, Asn54, Asn61, and Asn96. The helical transmembrane segment at Leu138–Ala158 threads the bilayer. Residues Asp159–Pro166 are Cytoplasmic-facing. The chain crosses the membrane as a helical span at residues Leu167–Phe187. Topologically, residues Ser188–Arg194 are extracellular. Residues Phe195–Trp215 form a helical membrane-spanning segment. At Met216–Gly225 the chain is on the cytoplasmic side. Residues Ile226 to Ile246 traverse the membrane as a helical segment. Over Arg247 to Arg250 the chain is Extracellular. A helical membrane pass occupies residues Trp251–Pro271. Residues Glu272–Arg339 are Cytoplasmic-facing. Residues Val340–Met360 traverse the membrane as a helical segment. The Extracellular segment spans residues Asp361–Gly366. Residues Leu367–Ala387 traverse the membrane as a helical segment. The Cytoplasmic segment spans residues Thr388–Arg397. A helical transmembrane segment spans residues Ala398–Pro418. Over Glu419 to Arg425 the chain is Extracellular. A helical membrane pass occupies residues Thr426–Phe446. Topologically, residues Thr447–Gln457 are cytoplasmic. Residues Met458 to Thr478 form a helical membrane-spanning segment. The Extracellular segment spans residues Thr479 to Pro485. The helical transmembrane segment at Val486 to Phe506 threads the bilayer. Over Leu507–Ile556 the chain is Cytoplasmic. Positions Val526–Glu541 are enriched in basic and acidic residues. The disordered stretch occupies residues Val526–Ile556.

This sequence belongs to the major facilitator (TC 2.A.1) superfamily. Organic cation transporter (TC 2.A.1.19) family. As to expression, highly expressed in olfactory mucosa. Weakly expressed in testis. Not detected in heart, spleen, lung, kidney or brain.

Its subcellular location is the membrane. Organic anion transporter that mediates the uptake of estrone sulfate. Inhibited by probenecid, propionate, 2-methylbutyrate, 3-methylbutyrate, benzoate, heptanoate and 2-ethylhaxanoate. May act as an odorant transporter. The chain is Solute carrier family 22 member 20 (Slc22a20) from Mus musculus (Mouse).